A 139-amino-acid polypeptide reads, in one-letter code: Probable DNA-binding protein (139 aa).

The tract at residues 97–139 (DEPSREASPDLGAAGAELEDESAQAGAVQGPETLRSQVLRART) is disordered.

This chain is Probable DNA-binding protein, found in Homo sapiens (Human).